Reading from the N-terminus, the 115-residue chain is Large ribosomal subunit protein bL20c (115 aa).

The protein belongs to the bacterial ribosomal protein bL20 family.

The protein resides in the plastid. It localises to the chloroplast. Binds directly to 23S ribosomal RNA and is necessary for the in vitro assembly process of the 50S ribosomal subunit. It is not involved in the protein synthesizing functions of that subunit. The protein is Large ribosomal subunit protein bL20c of Chaetosphaeridium globosum (Charophycean green alga).